A 375-amino-acid polypeptide reads, in one-letter code: PTS system fructose-specific EIIC component (375 aa).

One can recognise a PTS EIIC type-2 domain in the interval 16–370; that stretch reads VKEDLMTGVS…KPNFDAKMAA (355 aa). A run of 10 helical transmembrane segments spans residues 24–44, 68–88, 93–113, 122–142, 160–180, 203–223, 238–258, 279–299, 301–321, and 340–360; these read VSFMIPFVTIGGIFLALGYAV, IGVAGLTLMVPVLGAYIAYAI, GLAPGFILSYIIQQGNVLQAA, GSAGAGYLGAIVAGFLAGIVA, VLLIPVATTAVLTPVMLFVLG, AILLGGILGAMMAADMGGPIN, VTAPMAAVMIAGMVPPIGLAL, VLLGFSFITEGAIPYAAADPA, VIPSVVAGSAVAGAASMALGV, and FMFIACILLGSIVTAVIATAI.

It is found in the cell membrane. In terms of biological role, the phosphoenolpyruvate-dependent sugar phosphotransferase system (sugar PTS), a major carbohydrate active transport system, catalyzes the phosphorylation of incoming sugar substrates concomitantly with their translocation across the cell membrane. The enzyme II PtfABC PTS system is involved in fructose transport. In Haloferax volcanii (strain ATCC 29605 / DSM 3757 / JCM 8879 / NBRC 14742 / NCIMB 2012 / VKM B-1768 / DS2) (Halobacterium volcanii), this protein is PTS system fructose-specific EIIC component.